A 412-amino-acid polypeptide reads, in one-letter code: Odorant receptor 47b (412 aa).

Residues 1–74 (MNDSGYQSNL…NLFIMCNVMT (74 aa)) are Cytoplasmic-facing. The helical transmembrane segment at 75-95 (IFWTMFVALPESKNVIEMGDD) threads the bilayer. Residues 96–103 (LVWISGMA) are Extracellular-facing. The helical transmembrane segment at 104 to 124 (LVFTKIFYMHLRCDEIDELIS) threads the bilayer. The Cytoplasmic segment spans residues 125–169 (DFEYYNRELRPHNIDEEVLGWQRLCYVIESGLYINCFCLVNFFSA). The helical transmembrane segment at 170 to 190 (AIFLQPLLGEGKLPFHSVYPF) threads the bilayer. At 191-229 (QWHRLDLHPYTFWFLYIWQSLTSQHNLMSILMVDMVGIS) the chain is on the extracellular side. A helical membrane pass occupies residues 230–250 (TFLQTALNLKLLCIEIRKLGD). Topologically, residues 251–302 (MEVSDKRFHEEFCRVVRFHQHIIKLVGKANRAFNGAFNAQLMASFSLISIST) are cytoplasmic. Residues 303 to 323 (FETMAAAAVDPKMAAKFVLLM) form a helical membrane-spanning segment. The Extracellular portion of the chain corresponds to 324–330 (LVAFIQL). A helical transmembrane segment spans residues 331–351 (SLWCVSGTLVYTQSVEVAQAA). At 352 to 389 (FDINDWHTKSPGIQRDISFVILRAQKPLMYVAEPFLPF) the chain is on the cytoplasmic side. A helical membrane pass occupies residues 390 to 410 (TLGTYMLVLKNCYRLLALMQE). At 411 to 412 (SM) the chain is on the extracellular side.

It belongs to the insect chemoreceptor superfamily. Heteromeric odorant receptor channel (TC 1.A.69) family. Or49a subfamily. As to quaternary structure, interacts with Orco. Complexes exist early in the endomembrane system in olfactory sensory neurons (OSNs), coupling these complexes to the conserved ciliary trafficking pathway. Expressed in olfactory sensory neurons in the antenna.

The protein localises to the cell membrane. Its function is as follows. Odorant receptor which mediates acceptance or avoidance behavior, depending on its substrates. The odorant receptor repertoire encodes a large collection of odor stimuli that vary widely in identity, intensity, and duration. May form a complex with Orco to form odorant-sensing units, providing sensitive and prolonged odorant signaling and calcium permeability. Plays an important role in sociosexual interactions since its enhances courtship in a pheromone-dependent manner. The chain is Odorant receptor 47b (Or47b) from Drosophila melanogaster (Fruit fly).